The chain runs to 313 residues: Elongation factor Ts (313 aa).

The segment at 82–85 (TDFV) is involved in Mg(2+) ion dislocation from EF-Tu.

Belongs to the EF-Ts family.

It localises to the cytoplasm. Associates with the EF-Tu.GDP complex and induces the exchange of GDP to GTP. It remains bound to the aminoacyl-tRNA.EF-Tu.GTP complex up to the GTP hydrolysis stage on the ribosome. The protein is Elongation factor Ts of Nostoc sp. (strain PCC 7120 / SAG 25.82 / UTEX 2576).